The sequence spans 494 residues: Guanosine-5'-triphosphate,3'-diphosphate pyrophosphatase (494 aa).

This sequence belongs to the GppA/Ppx family. GppA subfamily.

The enzyme catalyses guanosine 3'-diphosphate 5'-triphosphate + H2O = guanosine 3',5'-bis(diphosphate) + phosphate + H(+). The protein operates within purine metabolism; ppGpp biosynthesis; ppGpp from GTP: step 2/2. In terms of biological role, catalyzes the conversion of pppGpp to ppGpp. Guanosine pentaphosphate (pppGpp) is a cytoplasmic signaling molecule which together with ppGpp controls the 'stringent response', an adaptive process that allows bacteria to respond to amino acid starvation, resulting in the coordinated regulation of numerous cellular activities. The chain is Guanosine-5'-triphosphate,3'-diphosphate pyrophosphatase from Escherichia coli O157:H7.